Consider the following 54-residue polypeptide: Glutathione S-transferase 6.7 (54 aa).

The protein belongs to the GST superfamily. Theta family. In terms of assembly, homodimer. The N-terminus is blocked.

It is found in the cytoplasm. The catalysed reaction is RX + glutathione = an S-substituted glutathione + a halide anion + H(+). Conjugation of reduced glutathione to a wide number of exogenous and endogenous hydrophobic electrophiles. This Dicentrarchus labrax (European seabass) protein is Glutathione S-transferase 6.7.